We begin with the raw amino-acid sequence, 166 residues long: Large ribosomal subunit protein uL10 (166 aa).

The protein belongs to the universal ribosomal protein uL10 family. Part of the ribosomal stalk of the 50S ribosomal subunit. The N-terminus interacts with L11 and the large rRNA to form the base of the stalk. The C-terminus forms an elongated spine to which L12 dimers bind in a sequential fashion forming a multimeric L10(L12)X complex.

Functionally, forms part of the ribosomal stalk, playing a central role in the interaction of the ribosome with GTP-bound translation factors. In Enterococcus faecalis (strain ATCC 700802 / V583), this protein is Large ribosomal subunit protein uL10.